A 711-amino-acid chain; its full sequence is MND1-interacting protein 1 (711 aa).

Residues E390–N648 are a coiled coil. Disordered stretches follow at residues E552–N571 and R602–K622. Over residues R602–S611 the composition is skewed to basic and acidic residues. Residues C653 to R697 form an RING-type zinc finger.

Interacts (via C-terminal domain) with MND1 and HOP2. Interacts with XRI1 (via C-terminal domain).

The chain is MND1-interacting protein 1 (MIP1) from Arabidopsis thaliana (Mouse-ear cress).